A 426-amino-acid chain; its full sequence is Enolase (426 aa).

A (2R)-2-phosphoglycerate-binding site is contributed by Gln-162. The Proton donor role is filled by Glu-204. Mg(2+)-binding residues include Asp-241, Glu-288, and Asp-315. 4 residues coordinate (2R)-2-phosphoglycerate: Lys-340, Arg-369, Ser-370, and Lys-391. Lys-340 functions as the Proton acceptor in the catalytic mechanism.

The protein belongs to the enolase family. Mg(2+) is required as a cofactor.

The protein localises to the cytoplasm. The protein resides in the secreted. It localises to the cell surface. The enzyme catalyses (2R)-2-phosphoglycerate = phosphoenolpyruvate + H2O. It functions in the pathway carbohydrate degradation; glycolysis; pyruvate from D-glyceraldehyde 3-phosphate: step 4/5. In terms of biological role, catalyzes the reversible conversion of 2-phosphoglycerate (2-PG) into phosphoenolpyruvate (PEP). It is essential for the degradation of carbohydrates via glycolysis. The protein is Enolase of Bacteroides thetaiotaomicron (strain ATCC 29148 / DSM 2079 / JCM 5827 / CCUG 10774 / NCTC 10582 / VPI-5482 / E50).